We begin with the raw amino-acid sequence, 1235 residues long: ATP-dependent helicase/nuclease subunit A (1235 aa).

A UvrD-like helicase ATP-binding domain is found at 12 to 482 (TLWTDDQWKA…IDLSQNFRSR (471 aa)). Position 33-40 (33-40 (AAAGSGKT)) interacts with ATP. In terms of domain architecture, UvrD-like helicase C-terminal spans 509 to 800 (AAELTLGANF…RMMTIHASKG (292 aa)).

The protein belongs to the helicase family. AddA subfamily. In terms of assembly, heterodimer of AddA and AddB/RexB. Requires Mg(2+) as cofactor.

It carries out the reaction Couples ATP hydrolysis with the unwinding of duplex DNA by translocating in the 3'-5' direction.. It catalyses the reaction ATP + H2O = ADP + phosphate + H(+). Its function is as follows. The heterodimer acts as both an ATP-dependent DNA helicase and an ATP-dependent, dual-direction single-stranded exonuclease. Recognizes the chi site generating a DNA molecule suitable for the initiation of homologous recombination. The AddA nuclease domain is required for chi fragment generation; this subunit has the helicase and 3' -&gt; 5' nuclease activities. The chain is ATP-dependent helicase/nuclease subunit A from Listeria welshimeri serovar 6b (strain ATCC 35897 / DSM 20650 / CCUG 15529 / CIP 8149 / NCTC 11857 / SLCC 5334 / V8).